The primary structure comprises 856 residues: Leucine--tRNA ligase (856 aa).

Residues 53-63 carry the 'HIGH' region motif; it reads PYPSGNLHMGH. The 'KMSKS' region motif lies at 622–626; that stretch reads KMSKS. Lys-625 contributes to the ATP binding site.

It belongs to the class-I aminoacyl-tRNA synthetase family.

Its subcellular location is the cytoplasm. It catalyses the reaction tRNA(Leu) + L-leucine + ATP = L-leucyl-tRNA(Leu) + AMP + diphosphate. The sequence is that of Leucine--tRNA ligase from Prochlorococcus marinus (strain MIT 9301).